A 593-amino-acid polypeptide reads, in one-letter code: Aspartate--tRNA(Asp/Asn) ligase (593 aa).

Glutamate 173 serves as a coordination point for L-aspartate. The aspartate stretch occupies residues 197-200 (QLFK). L-aspartate is bound at residue arginine 219. ATP is bound by residues 219–221 (RDE) and glutamine 228. An L-aspartate-binding site is contributed by histidine 451. Residue glutamate 485 coordinates ATP. Arginine 492 contributes to the L-aspartate binding site. 537 to 540 (GIDR) is a binding site for ATP.

It belongs to the class-II aminoacyl-tRNA synthetase family. Type 1 subfamily. As to quaternary structure, homodimer.

It localises to the cytoplasm. The catalysed reaction is tRNA(Asx) + L-aspartate + ATP = L-aspartyl-tRNA(Asx) + AMP + diphosphate. In terms of biological role, aspartyl-tRNA synthetase with relaxed tRNA specificity since it is able to aspartylate not only its cognate tRNA(Asp) but also tRNA(Asn). Reaction proceeds in two steps: L-aspartate is first activated by ATP to form Asp-AMP and then transferred to the acceptor end of tRNA(Asp/Asn). This is Aspartate--tRNA(Asp/Asn) ligase from Legionella pneumophila subsp. pneumophila (strain Philadelphia 1 / ATCC 33152 / DSM 7513).